The primary structure comprises 142 residues: Immunoglobulin omega chain (142 aa).

The first 19 residues, 1–19 (MAWTSVLLMLLAHLTGCGP), serve as a signal peptide directing secretion. A framework-1 region spans residues 20-41 (QPMVHQPPSASSSLGATIRLSC). Cysteine 41 and cysteine 115 are joined by a disulfide. A complementarity-determining-1 region spans residues 42–56 (TLSNDHNIGIYSIYW). Residues 57–70 (YQQRPGHPPRFLLR) form a framework-2 region. A complementarity-determining-2 region spans residues 71–81 (YFSHSDKHQGP). A framework-3 region spans residues 82–115 (DIPPRFSGSKDTARNLGYLSISELQPEDEAVYYC).

This sequence belongs to the immunoglobulin superfamily. Only expressed by pre-B-cells.

Associates with the Ig-mu chain to form a molecular complex that is expressed on the surface of pre-B-cells. This complex presumably regulates Ig gene rearrangements in the early steps of B-cell differentiation. In Mus musculus (Mouse), this protein is Immunoglobulin omega chain.